Reading from the N-terminus, the 408-residue chain is MPVNYATPAADQLFPVAGVRLGVAEAEIRKKNRRDLTLVALDAGCTVAGVFTQNRFCAAPVQLCRNHLAGGHEIRALVINTGIANAGTGEPGRQTAQASCDAVAELLGIKAEQVLPFSTGVILEPLPVERLKAGLPAAKADLKADNWHAAAHAIMTTDTVAKAASRVVTVNGKKISISGVSKGAGMIKPNMATMLGFLATDASIAQGMLDKLVKEAADASFNCITVDGDTSTNDSFVMIASGQSGASFATETDAGWAEVKAAIIAVSVELAQAIVRDGEGATKFITVAVEGGKDSEECRKVGYAIGHSPLVKTAFFASDPNLGRILAAVGYAGINDLDVDGVRVWLDEVLVAEKGGRAAAYKEEDGARVMAQAEITVRVDLGRGAAKASVYTCDFSYDYVKINADYRS.

Threonine 156, lysine 182, threonine 193, glutamate 279, asparagine 403, and serine 408 together coordinate substrate. Catalysis depends on threonine 193, which acts as the Nucleophile.

The protein belongs to the ArgJ family. Heterotetramer of two alpha and two beta chains.

It is found in the cytoplasm. The catalysed reaction is N(2)-acetyl-L-ornithine + L-glutamate = N-acetyl-L-glutamate + L-ornithine. It catalyses the reaction L-glutamate + acetyl-CoA = N-acetyl-L-glutamate + CoA + H(+). Its pathway is amino-acid biosynthesis; L-arginine biosynthesis; L-ornithine and N-acetyl-L-glutamate from L-glutamate and N(2)-acetyl-L-ornithine (cyclic): step 1/1. It participates in amino-acid biosynthesis; L-arginine biosynthesis; N(2)-acetyl-L-ornithine from L-glutamate: step 1/4. In terms of biological role, catalyzes two activities which are involved in the cyclic version of arginine biosynthesis: the synthesis of N-acetylglutamate from glutamate and acetyl-CoA as the acetyl donor, and of ornithine by transacetylation between N(2)-acetylornithine and glutamate. The polypeptide is Arginine biosynthesis bifunctional protein ArgJ (Dechloromonas aromatica (strain RCB)).